Reading from the N-terminus, the 507-residue chain is Type II methyltransferase M.PstI (507 aa).

This sequence belongs to the N(4)/N(6)-methyltransferase family. As to quaternary structure, monomer.

The catalysed reaction is a 2'-deoxyadenosine in DNA + S-adenosyl-L-methionine = an N(6)-methyl-2'-deoxyadenosine in DNA + S-adenosyl-L-homocysteine + H(+). Functionally, a gamma subtype methylase that recognizes the double-stranded sequence 5'-CTGCAG-3', methylates A-5 on both strands, and protects the DNA from cleavage by the PstI endonuclease. The protein is Type II methyltransferase M.PstI (pstIM) of Providencia stuartii.